Consider the following 402-residue polypeptide: Propionate kinase (402 aa).

ATP is bound by residues N11 and K18. Position 11 (N11) interacts with Mg(2+). R86 serves as a coordination point for substrate. The Proton donor/acceptor role is filled by D143. Residues H175, 203–207 (HLGNG), 278–280 (DLR), and 326–330 (GIGEN) each bind ATP.

The protein belongs to the acetokinase family. TdcD subfamily. Homodimer. Mg(2+) is required as a cofactor.

The catalysed reaction is propanoate + ATP = propanoyl phosphate + ADP. The protein operates within amino-acid degradation; L-threonine degradation via propanoate pathway; propanoate from L-threonine: step 4/4. In terms of biological role, catalyzes the conversion of propionyl phosphate and ADP to propionate and ATP. The chain is Propionate kinase from Edwardsiella piscicida.